A 437-amino-acid polypeptide reads, in one-letter code: Probable eukaryotic translation initiation factor 5-2 (437 aa).

29-36 (GKGNGIKT) contributes to the GTP binding site. Composition is skewed to basic and acidic residues over residues 148–179 (EQKK…EQRK) and 191–212 (KDSK…HDEN). 2 disordered regions span residues 148–231 (EQKK…WQTD) and 262–284 (EKKA…PPQE). Serine 201 carries the phosphoserine; by CK2 modification. The span at 213–226 (ALEVDEDEDDDDGV) shows a compositional bias: acidic residues. Threonine 230 is subject to Phosphothreonine; by CK2. Positions 278-436 (ENPPPQEKNL…QSAESESEEE (159 aa)) constitute a W2 domain. Serine 428, serine 431, and serine 433 each carry phosphoserine; by CK2.

The protein belongs to the eIF-2-beta/eIF-5 family. Post-translationally, phosphorylated at Ser-201, Thr-230, Ser-428, Ser-431, and Ser-433 by CK2.

Catalyzes the hydrolysis of GTP bound to the 40S ribosomal initiation complex (40S.mRNA.Met-tRNA[F].eIF-2.GTP) with the subsequent joining of a 60S ribosomal subunit resulting in the release of eIF-2 and the guanine nucleotide. The subsequent joining of a 60S ribosomal subunit results in the formation of a functional 80S initiation complex (80S.mRNA.Met-tRNA[F]). The chain is Probable eukaryotic translation initiation factor 5-2 from Arabidopsis thaliana (Mouse-ear cress).